We begin with the raw amino-acid sequence, 358 residues long: Cholesterol galactosyltransferase (358 aa).

This sequence belongs to the glycosyltransferase 2 family.

The enzyme catalyses cholesterol + UDP-alpha-D-galactose = cholesteryl 3-beta-D-galactoside + UDP + H(+). The protein operates within glycolipid biosynthesis. Its function is as follows. Galactosyltransferase involved in the synthesis of cholesterol glycolipids, which are formed by the use of host-derived cholesterol and have been shown to be immunogenic, and possibly contribute to Lyme disease pathogenesis. Catalyzes the formation of cholesteryl beta-D-galactopyranoside (CGal) from cholesterol and UDP-alpha-D-galactose. Cannot use GDP-mannose. This chain is Cholesterol galactosyltransferase, found in Borreliella burgdorferi (strain ATCC 35210 / DSM 4680 / CIP 102532 / B31) (Borrelia burgdorferi).